The chain runs to 109 residues: Large ribosomal subunit protein uL22 (109 aa).

The protein belongs to the universal ribosomal protein uL22 family. Part of the 50S ribosomal subunit.

Functionally, this protein binds specifically to 23S rRNA; its binding is stimulated by other ribosomal proteins, e.g. L4, L17, and L20. It is important during the early stages of 50S assembly. It makes multiple contacts with different domains of the 23S rRNA in the assembled 50S subunit and ribosome. In terms of biological role, the globular domain of the protein is located near the polypeptide exit tunnel on the outside of the subunit, while an extended beta-hairpin is found that lines the wall of the exit tunnel in the center of the 70S ribosome. This chain is Large ribosomal subunit protein uL22, found in Bordetella petrii (strain ATCC BAA-461 / DSM 12804 / CCUG 43448).